The sequence spans 315 residues: tRNA dimethylallyltransferase (315 aa).

14-21 (GATATGKS) provides a ligand contact to ATP. 16 to 21 (TATGKS) serves as a coordination point for substrate. Residues 39–42 (DSRQ) form an interaction with substrate tRNA region.

The protein belongs to the IPP transferase family. As to quaternary structure, monomer. The cofactor is Mg(2+).

The enzyme catalyses adenosine(37) in tRNA + dimethylallyl diphosphate = N(6)-dimethylallyladenosine(37) in tRNA + diphosphate. Functionally, catalyzes the transfer of a dimethylallyl group onto the adenine at position 37 in tRNAs that read codons beginning with uridine, leading to the formation of N6-(dimethylallyl)adenosine (i(6)A). The chain is tRNA dimethylallyltransferase from Microcystis aeruginosa (strain NIES-843 / IAM M-2473).